The sequence spans 283 residues: Thymidylate synthase (283 aa).

Position 22 (arginine 22) interacts with dUMP. Cysteine 160 serves as the catalytic Nucleophile. Residues 180-183 (RSCD), asparagine 191, and 221-223 (HIY) contribute to the dUMP site. Aspartate 183 contacts (6R)-5,10-methylene-5,6,7,8-tetrahydrofolate. Residue alanine 282 participates in (6R)-5,10-methylene-5,6,7,8-tetrahydrofolate binding.

The protein belongs to the thymidylate synthase family. Bacterial-type ThyA subfamily. In terms of assembly, homodimer.

The protein localises to the cytoplasm. It catalyses the reaction dUMP + (6R)-5,10-methylene-5,6,7,8-tetrahydrofolate = 7,8-dihydrofolate + dTMP. It participates in pyrimidine metabolism; dTTP biosynthesis. In terms of biological role, catalyzes the reductive methylation of 2'-deoxyuridine-5'-monophosphate (dUMP) to 2'-deoxythymidine-5'-monophosphate (dTMP) while utilizing 5,10-methylenetetrahydrofolate (mTHF) as the methyl donor and reductant in the reaction, yielding dihydrofolate (DHF) as a by-product. This enzymatic reaction provides an intracellular de novo source of dTMP, an essential precursor for DNA biosynthesis. This chain is Thymidylate synthase, found in Colwellia psychrerythraea (strain 34H / ATCC BAA-681) (Vibrio psychroerythus).